Here is a 291-residue protein sequence, read N- to C-terminus: Diaminopimelate epimerase (291 aa).

The substrate site is built by Asn-17, Gln-50, and Asn-70. The active-site Proton donor is the Cys-79. Residues 80-81 (GN), Asn-167, Asn-200, and 218-219 (ER) contribute to the substrate site. The active-site Proton acceptor is the Cys-227. Substrate is bound at residue 228 to 229 (GS).

It belongs to the diaminopimelate epimerase family. In terms of assembly, homodimer.

Its subcellular location is the cytoplasm. The catalysed reaction is (2S,6S)-2,6-diaminopimelate = meso-2,6-diaminopimelate. It participates in amino-acid biosynthesis; L-lysine biosynthesis via DAP pathway; DL-2,6-diaminopimelate from LL-2,6-diaminopimelate: step 1/1. In terms of biological role, catalyzes the stereoinversion of LL-2,6-diaminopimelate (L,L-DAP) to meso-diaminopimelate (meso-DAP), a precursor of L-lysine and an essential component of the bacterial peptidoglycan. The polypeptide is Diaminopimelate epimerase (Bradyrhizobium diazoefficiens (strain JCM 10833 / BCRC 13528 / IAM 13628 / NBRC 14792 / USDA 110)).